The chain runs to 120 residues: Seripauperin-20 (120 aa).

Residues 7 to 25 (IAAGVAAIAAGASATTTLA) form a helical membrane-spanning segment.

It belongs to the SRP1/TIP1 family. Seripauperin subfamily.

It localises to the membrane. This Saccharomyces cerevisiae (strain ATCC 204508 / S288c) (Baker's yeast) protein is Seripauperin-20 (PAU20).